A 212-amino-acid chain; its full sequence is MQVLHIDSSITGAASVSRQLTAQTVAALVAANPGAKVEYLDLAVNAPDHLNAVSMGFRTGQAATTEAERAQNAISEALVSQFLAADVVVVGAPFYNFTISSQLKAWIDRIAQGGRTFRYTAAGPEGLAKGKKVIVASTRGGVYSTSEMGQALEHQESYLKTVFGFLGITDVSIVRAEGVAMGDESKAKALESARSDIVRAAAAANQEAAIAA.

FMN is bound by residues serine 9, 15 to 17 (SVS), and 138 to 141 (TRGG).

It belongs to the azoreductase type 1 family. As to quaternary structure, homodimer. It depends on FMN as a cofactor.

It catalyses the reaction 2 a quinone + NADH + H(+) = 2 a 1,4-benzosemiquinone + NAD(+). The catalysed reaction is N,N-dimethyl-1,4-phenylenediamine + anthranilate + 2 NAD(+) = 2-(4-dimethylaminophenyl)diazenylbenzoate + 2 NADH + 2 H(+). Its function is as follows. Quinone reductase that provides resistance to thiol-specific stress caused by electrophilic quinones. Also exhibits azoreductase activity. Catalyzes the reductive cleavage of the azo bond in aromatic azo compounds to the corresponding amines. In Delftia acidovorans (strain DSM 14801 / SPH-1), this protein is FMN-dependent NADH:quinone oxidoreductase.